The sequence spans 346 residues: Inositol 2-dehydrogenase/D-chiro-inositol 3-dehydrogenase (346 aa).

This sequence belongs to the Gfo/Idh/MocA family. Homotetramer.

It carries out the reaction myo-inositol + NAD(+) = scyllo-inosose + NADH + H(+). The catalysed reaction is 1D-chiro-inositol + NAD(+) = scyllo-inosine + NADH + H(+). Its pathway is polyol metabolism; myo-inositol degradation into acetyl-CoA; acetyl-CoA from myo-inositol: step 1/7. In terms of biological role, involved in the oxidation of myo-inositol (MI) and D-chiro-inositol (DCI) to 2-keto-myo-inositol (2KMI or 2-inosose) and 1-keto-D-chiro-inositol (1KDCI), respectively. The chain is Inositol 2-dehydrogenase/D-chiro-inositol 3-dehydrogenase from Lacticaseibacillus casei (Lactobacillus casei).